We begin with the raw amino-acid sequence, 357 residues long: Protein Wnt-9b (357 aa).

The signal sequence occupies residues 1 to 22 (MRPPPALALAGLCLLALPAAAA). Intrachain disulfides connect Cys-89-Cys-100, Cys-135-Cys-143, Cys-145-Cys-162, Cys-210-Cys-224, Cys-212-Cys-219, Cys-291-Cys-316, Cys-305-Cys-311, Cys-315-Cys-355, Cys-331-Cys-346, Cys-333-Cys-343, and Cys-338-Cys-339. N-linked (GlcNAc...) asparagine glycosylation is present at Asn-99. Ser-216 carries O-palmitoleoyl serine; by PORCN lipidation.

It belongs to the Wnt family. In terms of assembly, forms a soluble 1:1 complex with AFM; this prevents oligomerization and is required for prolonged biological activity. The complex with AFM may represent the physiological form in body fluids. Component of the Wnt-Fzd-LRP5-LRP6 signaling complex that contains a WNT protein, a FZD protein and LRP5 or LRP6. Interacts directly in the complex with LRP6. Interacts with PKD1 (via extracellular domain). Palmitoleoylation is required for efficient binding to frizzled receptors. Depalmitoleoylation leads to Wnt signaling pathway inhibition. As to expression, moderately expressed in fetal kidney and adult kidney. Also found in brain.

Its subcellular location is the secreted. The protein localises to the extracellular space. It localises to the extracellular matrix. Ligand for members of the frizzled family of seven transmembrane receptors. Functions in the canonical Wnt/beta-catenin signaling pathway. Required for normal embryonic kidney development, and for normal development of the urogenital tract, including uterus and part of the oviduct and the upper vagina in females, and epididymis and vas deferens in males. Activates a signaling cascade in the metanephric mesenchyme that induces tubulogenesis. Acts upstream of WNT4 in the signaling pathways that mediate development of kidney tubules and the Muellerian ducts. Plays a role in cranofacial development and is required for normal fusion of the palate during embryonic development. The chain is Protein Wnt-9b (WNT9B) from Homo sapiens (Human).